A 457-amino-acid polypeptide reads, in one-letter code: MKSTVEQLSPTRVRINVEVPFAELKSDFDKAYKALAQQIRLPGFRPGKAPARLLEARVGRGAVLEQVVNDALPSRYSEAVTSAGVKAIGQPEIEVTKIEDGELLEFTAEVDVRPEIELPDFSSINVEVDPIEITDEAIEEQLLSLRQRFGTLTGVDRAVEDGDFVSIDLSATVDGENVAEATASGLSHEVGSGQLIEGLDEAIIGLKAGESKDFTSTLVAGEYAGKEAVVTVTVQTVKERELPAEDDEFAQLASEFDTLEELKADLRERVARVRKVEQAGQIRDKVLEQLLETVEVPLPEAVVKAEVDAALHDAVHGLDHDEEALNKLLEEQGSSREEFDKDAQEAAERSVKTQLLLDSIADAGNVTVGQDELTERILFQAQRYGMAPEQFIQQIQQANQLGAVFADVRRGKALASVVESAGVKDTSGAVVDTAELFGSSEDETEADASDSAESEDK.

Residues 162 to 243 (GDFVSIDLSA…VQTVKERELP (82 aa)) form the PPIase FKBP-type domain. The disordered stretch occupies residues 434–457 (AELFGSSEDETEADASDSAESEDK). Residues 440-457 (SEDETEADASDSAESEDK) are compositionally biased toward acidic residues.

This sequence belongs to the FKBP-type PPIase family. Tig subfamily.

It localises to the cytoplasm. It carries out the reaction [protein]-peptidylproline (omega=180) = [protein]-peptidylproline (omega=0). Its function is as follows. Involved in protein export. Acts as a chaperone by maintaining the newly synthesized protein in an open conformation. Functions as a peptidyl-prolyl cis-trans isomerase. The sequence is that of Trigger factor from Rhodococcus erythropolis (strain PR4 / NBRC 100887).